A 627-amino-acid chain; its full sequence is 1-deoxy-D-xylulose-5-phosphate synthase (627 aa).

Residues H80 and 121 to 123 each bind thiamine diphosphate; that span reads GHS. D152 contacts Mg(2+). Thiamine diphosphate contacts are provided by residues 153–154, N181, Y288, and E370; that span reads GA. N181 contacts Mg(2+).

This sequence belongs to the transketolase family. DXPS subfamily. Homodimer. The cofactor is Mg(2+). Requires thiamine diphosphate as cofactor.

The catalysed reaction is D-glyceraldehyde 3-phosphate + pyruvate + H(+) = 1-deoxy-D-xylulose 5-phosphate + CO2. It participates in metabolic intermediate biosynthesis; 1-deoxy-D-xylulose 5-phosphate biosynthesis; 1-deoxy-D-xylulose 5-phosphate from D-glyceraldehyde 3-phosphate and pyruvate: step 1/1. In terms of biological role, catalyzes the acyloin condensation reaction between C atoms 2 and 3 of pyruvate and glyceraldehyde 3-phosphate to yield 1-deoxy-D-xylulose-5-phosphate (DXP). This is 1-deoxy-D-xylulose-5-phosphate synthase from Aliivibrio fischeri (strain ATCC 700601 / ES114) (Vibrio fischeri).